The primary structure comprises 94 residues: Small ribosomal subunit protein bS6 (94 aa).

It belongs to the bacterial ribosomal protein bS6 family.

Its function is as follows. Binds together with bS18 to 16S ribosomal RNA. This chain is Small ribosomal subunit protein bS6, found in Fusobacterium nucleatum subsp. nucleatum (strain ATCC 25586 / DSM 15643 / BCRC 10681 / CIP 101130 / JCM 8532 / KCTC 2640 / LMG 13131 / VPI 4355).